Consider the following 146-residue polypeptide: Large ribosomal subunit protein uL13 (146 aa).

The protein belongs to the universal ribosomal protein uL13 family. Part of the 50S ribosomal subunit.

Functionally, this protein is one of the early assembly proteins of the 50S ribosomal subunit, although it is not seen to bind rRNA by itself. It is important during the early stages of 50S assembly. This is Large ribosomal subunit protein uL13 from Malacoplasma penetrans (strain HF-2) (Mycoplasma penetrans).